The primary structure comprises 435 residues: Ornithine decarboxylase (435 aa).

Lys76 is modified (N6-(pyridoxal phosphate)lysine). Pyridoxal 5'-phosphate is bound by residues Ser207, Gly244, and 283–286 (EPGR). Residue 339–340 (FD) participates in substrate binding. Residue Cys368 is the Proton donor; shared with dimeric partner of the active site. Asp369 contributes to the substrate binding site. Position 397 (Tyr397) interacts with pyridoxal 5'-phosphate.

It belongs to the Orn/Lys/Arg decarboxylase class-II family. In terms of assembly, homodimer. Only the dimer is catalytically active, as the active sites are constructed of residues from both monomers. The cofactor is pyridoxal 5'-phosphate.

It carries out the reaction L-ornithine + H(+) = putrescine + CO2. The protein operates within amine and polyamine biosynthesis; putrescine biosynthesis via L-ornithine pathway; putrescine from L-ornithine: step 1/1. Its activity is regulated as follows. Inhibited by antizyme (AZ) in response to polyamine levels. AZ inhibits the assembly of the functional homodimer by binding to ODC monomers and targeting them for ubiquitin-independent proteolytic destruction by the 26S proteasome. In terms of biological role, catalyzes the first and rate-limiting step of polyamine biosynthesis that converts ornithine into putrescine, which is the precursor for the polyamines, spermidine and spermine. Polyamines are essential for cell proliferation and are implicated in cellular processes, ranging from DNA replication to apoptosis. This Panagrellus redivivus (Microworm) protein is Ornithine decarboxylase (ODC).